The primary structure comprises 142 residues: Neuritin (142 aa).

The signal sequence occupies residues 1-27 (MGLKLNGRYISLILAVQIAYLVQAVRA). Residue Gly116 is the site of GPI-anchor amidated glycine attachment. Residues 117–142 (AAGPLLPALPVLLVSLSAALATWLSF) constitute a propeptide, removed in mature form.

This sequence belongs to the neuritin family. As to quaternary structure, component of the outer core of AMPAR complex. AMPAR complex consists of an inner core made of 4 pore-forming GluA/GRIA proteins (GRIA1, GRIA2, GRIA3 and GRIA4) and 4 major auxiliary subunits arranged in a twofold symmetry. One of the two pairs of distinct binding sites is occupied either by CNIH2, CNIH3 or CACNG2, CACNG3. The other harbors CACNG2, CACNG3, CACNG4, CACNG8 or GSG1L. This inner core of AMPAR complex is complemented by outer core constituents binding directly to the GluA/GRIA proteins at sites distinct from the interaction sites of the inner core constituents. Outer core constituents include at least PRRT1, PRRT2, CKAMP44/SHISA9, FRRS1L and NRN1. The proteins of the inner and outer core serve as a platform for other, more peripherally associated AMPAR constituents. Alone or in combination, these auxiliary subunits control the gating and pharmacology of the AMPAR complex and profoundly impact their biogenesis and protein processing.

Its subcellular location is the cell membrane. It localises to the synapse. In terms of biological role, promotes neurite outgrowth and especially branching of neuritic processes in primary hippocampal and cortical cells. The chain is Neuritin (NRN1) from Bos taurus (Bovine).